Consider the following 1274-residue polypeptide: Regulator of telomere elongation helicase 1 (1274 aa).

The region spanning 7 to 296 is the Helicase ATP-binding domain; that stretch reads NGVTVDFPFQ…ARVAQHGELQ (290 aa). 42–49 is a binding site for ATP; it reads SPTGTGKT. Residues Cys-145, Cys-163, Cys-172, and Cys-207 each contribute to the [4Fe-4S] cluster site. The short motif at 151–167 is the Nuclear localization signal element; it reads KKQESNHMQISLCRKKV. The DEAH box motif lies at 250–253; that stretch reads DEAH. Residues 871–877 carry the Nuclear localization signal motif; it reads QRGGKKK. Disordered stretches follow at residues 982–1002, 1014–1038, and 1143–1198; these read NSLPFGEQAQSTASKQGRREL, RQLDPGEHLNQGWPHLSTHLTSKGD, and ELPC…DDTI. Basic and acidic residues predominate over residues 1186-1196; it reads QRPDQSARSDD.

It belongs to the helicase family. RAD3/XPD subfamily. In terms of assembly, interacts with TERF1. Interacts (via PIP-box) with PCNA; the interaction is direct and essential for suppressing telomere fragility. Interacts with MMS19; the interaction mediates the association of RTEL1 with the cytosolic iron-sulfur protein assembly (CIA) complex.

It is found in the nucleus. The enzyme catalyses ATP + H2O = ADP + phosphate + H(+). Functionally, a probable ATP-dependent DNA helicase implicated in telomere-length regulation, DNA repair and the maintenance of genomic stability. Acts as an anti-recombinase to counteract toxic recombination and limit crossover during meiosis. Regulates meiotic recombination and crossover homeostasis by physically dissociating strand invasion events and thereby promotes noncrossover repair by meiotic synthesis dependent strand annealing (SDSA) as well as disassembly of D loop recombination intermediates. Also disassembles T loops and prevents telomere fragility by counteracting telomeric G4-DNA structures, which together ensure the dynamics and stability of the telomere. The chain is Regulator of telomere elongation helicase 1 (Rtel1) from Rattus norvegicus (Rat).